Here is a 400-residue protein sequence, read N- to C-terminus: Jasmonate-induced oxygenase 1 (400 aa).

Residues 248–349 (DVGACLRVNY…RVSLAFFYNP (102 aa)) enclose the Fe2OG dioxygenase domain. Arg-254 provides a ligand contact to jasmonate. 2 residues coordinate 2-oxoglutarate: Asn-256 and Tyr-258. 3 residues coordinate Fe cation: His-273, Asp-275, and His-330. 2-oxoglutarate is bound by residues Arg-340 and Ser-342. Residues Arg-379 and Arg-383 each coordinate jasmonate.

It belongs to the iron/ascorbate-dependent oxidoreductase family. Requires L-ascorbate as cofactor. It depends on Fe(2+) as a cofactor.

The enzyme catalyses jasmonate + 2-oxoglutarate + O2 = (1R,2R)-12-hydroxyjasmonate + succinate + CO2. 2-oxoglutarate-dependent dioxygenase involved in the oxidation of jasmonate (JA), a stress-induced phytohormone synthesized in response to attack by pathogens and herbivores, which triggers the activation of defense responses via the JA-mediated signaling pathway. Converts JA to 12-hydroxyjasmonate (12OH-JA), an inactive form of JA. Prevents over-accumulation of JA and indirectly its bioactive form JA-Ile under stress response. Acts as a negative regulator of JA-mediated defense signaling, by contributing to 12OH-JA accumulation, which represses JA defense responses upon infection by the fungal pathogen Botrytis cinerea and the herbivorous caterpillar Mamestra brassicae. The protein is Jasmonate-induced oxygenase 1 of Arabidopsis thaliana (Mouse-ear cress).